Consider the following 407-residue polypeptide: 41 kDa spicule matrix protein (407 aa).

Positions 1 to 17 (MKGVLFIVASLVAFATG) are cleaved as a signal peptide. The C-type lectin domain occupies 29-160 (SGQSCYRYFN…PGRAPVMKRQ (132 aa)). Disordered stretches follow at residues 143 to 176 (PQNP…IPQG) and 204 to 407 (IGQQ…DALA). Residues 223-369 (NQPGMGGRQP…MGGRQPGMGG (147 aa)) show a composition bias toward gly residues. The segment covering 370–398 (QQPNNPNNPNNPNNPNNPNNPNPRFNRPR) has biased composition (low complexity).

The protein belongs to the SM50 family. As to expression, expressed specifically in the micromere/primary mesenchyme cells (PMC) lineage.

It localises to the secreted. Its function is as follows. Major matrix protein of the sea urchin embryo spicule which directs crystal growth in certain orientations and inhibit growth in others. The protein is 41 kDa spicule matrix protein of Hemicentrotus pulcherrimus (Sea urchin).